A 511-amino-acid polypeptide reads, in one-letter code: Potassium voltage-gated channel subfamily A member 10 (511 aa).

Positions 25–44 are disordered; that stretch reads EPGYATDFDPTSSKGRPGSS. A helical transmembrane segment spans residues 218–238; the sequence is VAVVSVLVVVISITIFCLETL. Residues 271–292 traverse the membrane as a helical segment; sequence FFMVESTCIVWFTFELVLRFVV. The S-palmitoyl cysteine moiety is linked to residue cysteine 293. Residues 303–323 traverse the membrane as a helical segment; the sequence is IMNIIDIISIIPYFATLITEL. The chain crosses the membrane as a helical; Voltage-sensor span at residues 339-358; sequence ILRIIRLVRVFRIFKLSRHS. Residues 375–395 traverse the membrane as a helical segment; that stretch reads LGLLIFFLFIGVILFSSAVYF. A Selectivity filter motif is present at residues 421 to 426; sequence TVGYGD. A helical membrane pass occupies residues 436–456; sequence IVGTLCAIAGVLTIALPVPVI. A disordered region spans residues 489–511; that stretch reads SRMGSTESLNKTNGSCSAEKSRK.

This sequence belongs to the potassium channel family. A (Shaker) (TC 1.A.1.2) subfamily. Kv1.8/KCNA10 sub-subfamily. In terms of assembly, homotetramer. Interacts with KCN4B/POMP. Interaction with KCN4B/POMP is necessary for the modulation of channel activity by cAMP. Expressed strongly in the inner ear and weakly in skeletal muscle. Not detected in other tissues.

The protein resides in the membrane. The catalysed reaction is K(+)(in) = K(+)(out). With respect to regulation, the channel activity is up-regulated by cAMP. Voltage-gated potassium ion channel that mediates K(+) permeability of excitable membranes. When opened in response to the voltage difference across the membrane, KCNA10 channel selectively allows the flow of potassium ions across the membrane down their electrochemical gradient. This is Potassium voltage-gated channel subfamily A member 10 from Mus musculus (Mouse).